We begin with the raw amino-acid sequence, 165 residues long: 3-isopropylmalate dehydratase small subunit (165 aa).

This sequence belongs to the LeuD family. LeuD type 2 subfamily. As to quaternary structure, heterodimer of LeuC and LeuD.

It catalyses the reaction (2R,3S)-3-isopropylmalate = (2S)-2-isopropylmalate. Its pathway is amino-acid biosynthesis; L-leucine biosynthesis; L-leucine from 3-methyl-2-oxobutanoate: step 2/4. Functionally, catalyzes the isomerization between 2-isopropylmalate and 3-isopropylmalate, via the formation of 2-isopropylmaleate. This Halothermothrix orenii (strain H 168 / OCM 544 / DSM 9562) protein is 3-isopropylmalate dehydratase small subunit.